A 197-amino-acid polypeptide reads, in one-letter code: uncharacterized protein (197 aa).

Residues 33–184 (MISKIMDASS…IAEFMSILGK (152 aa)) form the SIS domain.

This sequence belongs to the SIS family. PHI subfamily.

This is an uncharacterized protein from Methanothermobacter thermautotrophicus (strain ATCC 29096 / DSM 1053 / JCM 10044 / NBRC 100330 / Delta H) (Methanobacterium thermoautotrophicum).